We begin with the raw amino-acid sequence, 242 residues long: uncharacterized protein (242 aa).

Helical transmembrane passes span 4–24 (NYQVSLIFSVIYVVTNSYYVV) and 34–54 (LLFGSFYLTMEVFQTLQWLFG). The N-linked (GlcNAc...) asparagine; by host glycan is linked to N73. A run of 3 helical transmembrane segments spans residues 74–94 (YTIVAFILIWLQPILFSVIGY), 106–126 (VLTVLNCFVFFYGLKLLYGGF), and 162–182 (LDVFPNHLTYIILCIISFVMY). N185 carries N-linked (GlcNAc...) asparagine; by host glycosylation. Transmembrane regions (helical) follow at residues 189–209 (VIGLGWLLSLIVTKLLLAPTL) and 217–237 (CLLSIIANLLIVAYVHISTGI).

The protein resides in the membrane. This is an uncharacterized protein from Acanthamoeba polyphaga mimivirus (APMV).